The sequence spans 598 residues: MFS siderochrome iron transporter D (598 aa).

Positions 1–34 are disordered; that stretch reads MLSSWQKKFFQTPEHPPAEGIAPPRDDGVPNPEP. The Cytoplasmic segment spans residues 1 to 76; sequence MLSSWQKKFF…AEAITLTWSK (76 aa). The helical transmembrane segment at 77-97 threads the bilayer; sequence ISLGAAYFLMWLLYLVNGFQA. Residues 98-115 lie on the Extracellular side of the membrane; that stretch reads SITGNLSAYVTSGFESHS. The N-linked (GlcNAc...) asparagine glycan is linked to N102. Residues 116 to 136 form a helical membrane-spanning segment; the sequence is LIPVISIVSSVMSAATYMPLA. Residues 137–144 lie on the Cytoplasmic side of the membrane; the sequence is KVLNLWDR. Residues 145 to 165 traverse the membrane as a helical segment; the sequence is SIGFIIMVAFATLGLILSATC. Residues 166 to 171 lie on the Extracellular side of the membrane; sequence HDIGTY. A helical membrane pass occupies residues 172–192; that stretch reads CAAQVFYSIGFAGIIFSVDVI. Over 193–203 the chain is Cytoplasmic; it reads TADTSTLRDRG. Residues 204–224 form a helical membrane-spanning segment; that stretch reads LAYAFTSSPYIITAFGGPAAA. Over 225-233 the chain is Extracellular; the sequence is EHFYDSNWR. Residues 234 to 254 form a helical membrane-spanning segment; that stretch reads WAYGCFSIVLPVVALPMFCLL. Topologically, residues 255–289 are cytoplasmic; sequence RWNRHKAKKSGLLKDKADSGRTWMESIRHYIIEFD. A helical membrane pass occupies residues 290–310; sequence ILGVFFLAAGLVLFLLPFSIA. Over 311 to 318 the chain is Extracellular; sequence GSTEDDWK. A helical transmembrane segment spans residues 319-339; the sequence is SASIITMLVIGFVCLLVFALV. At 340–341 the chain is on the cytoplasmic side; the sequence is ER. A helical transmembrane segment spans residues 342–362; sequence FVAPVPFLPWALLASRTVLGA. Residues 363–396 are Extracellular-facing; the sequence is CMLDVCYQIAYYCWFNYYTSYLQVVYGTSITTAG. Residues 397–417 form a helical membrane-spanning segment; the sequence is YITSIFDVVSGVWLFIVGFLI. The Cytoplasmic portion of the chain corresponds to 418–424; sequence KKTNRFR. The helical transmembrane segment at 425–445 threads the bilayer; the sequence is WLLFIAVPLYILGVGLMIYFR. Topologically, residues 446–450 are extracellular; sequence KPSWS. Residues 451–471 form a helical membrane-spanning segment; sequence VGYMIMCQIFIAFAGGTMIIC. Over 472–490 the chain is Cytoplasmic; that stretch reads QQVAVLAASDHDHAASSLA. The chain crosses the membrane as a helical span at residues 491-511; sequence FLNVFGTMGSAVGSSISGAIW. The Extracellular segment spans residues 512 to 562; it reads THTLPGALQRLLPDSVKADWQTIYDSLEEQLSYERGTLIRQAIALAYASTQ. A helical membrane pass occupies residues 563-583; sequence SKMLIAGTAIMALSLVWMFVI. The Cytoplasmic segment spans residues 584 to 598; it reads RDIKLTKTQTKGVLF.

This sequence belongs to the major facilitator superfamily.

The protein localises to the cell membrane. Its function is as follows. Major facilitator transporter involved in fusarinine C (FsC) uptake. In contrast to TAFC-mediated iron uptake, FsC-mediated iron uptake via mirD does not play a significant role during infection. The protein is MFS siderochrome iron transporter D of Aspergillus fumigatus (strain ATCC MYA-4609 / CBS 101355 / FGSC A1100 / Af293) (Neosartorya fumigata).